Consider the following 76-residue polypeptide: Conotoxin VnMEKL-021 (76 aa).

The N-terminal stretch at 1–19 (MQKLTILLLVAAVLMSTQA) is a signal peptide. A propeptide spanning residues 20–37 (LIKGGGEKRPKEKIKFLS) is cleaved from the precursor. Disulfide bonds link Cys51/Cys65, Cys58/Cys69, and Cys64/Cys73.

Belongs to the conotoxin O2 superfamily. In terms of tissue distribution, expressed by the venom duct.

It is found in the secreted. This chain is Conotoxin VnMEKL-021, found in Conus ventricosus (Mediterranean cone).